A 189-amino-acid chain; its full sequence is uncharacterized protein (189 aa).

The next 4 helical transmembrane spans lie at 35 to 55, 97 to 117, 123 to 143, and 144 to 164; these read IIWY…AVMK, GVLQ…ALHF, WLLF…YEWT, and GNLF…ACQI.

It localises to the cell membrane. This is an uncharacterized protein from Bacillus subtilis (strain 168).